The primary structure comprises 91 residues: Small ribosomal subunit protein bS20 (91 aa).

The tract at residues 1–25 is disordered; the sequence is MANTKSAEKRHRQSLKRRARNVTVR. The span at 8 to 20 shows a compositional bias: basic residues; the sequence is EKRHRQSLKRRAR.

The protein belongs to the bacterial ribosomal protein bS20 family.

In terms of biological role, binds directly to 16S ribosomal RNA. The polypeptide is Small ribosomal subunit protein bS20 (Myxococcus xanthus (strain DK1622)).